We begin with the raw amino-acid sequence, 657 residues long: Glycogen debranching enzyme (657 aa).

Asp-336 serves as the catalytic Nucleophile. Catalysis depends on Glu-371, which acts as the Proton donor. Residues 460–479 (ANGEENRDGTNNNYSNNHGK) are disordered.

Belongs to the glycosyl hydrolase 13 family.

The catalysed reaction is Hydrolysis of (1-&gt;6)-alpha-D-glucosidic linkages to branches with degrees of polymerization of three or four glucose residues in limit dextrin.. The protein operates within glycan degradation; glycogen degradation. In terms of biological role, removes maltotriose and maltotetraose chains that are attached by 1,6-alpha-linkage to the limit dextrin main chain, generating a debranched limit dextrin. The protein is Glycogen debranching enzyme of Escherichia coli O127:H6 (strain E2348/69 / EPEC).